The following is a 789-amino-acid chain: Phenylalanine--tRNA ligase beta subunit (789 aa).

The tRNA-binding domain occupies 39–149; it reads ADGLEAFRIA…HEAPVGQSYV (111 aa). One can recognise a B5 domain in the interval 399-471; that stretch reads SAVPVISYDP…RIEGLDNVPS (73 aa). Residues D449, D455, and D459 each coordinate Mg(2+). Residues 696–788 form the FDX-ACB domain; sequence SMLQPVFRDF…AAAKKGARLR (93 aa).

The protein belongs to the phenylalanyl-tRNA synthetase beta subunit family. Type 1 subfamily. As to quaternary structure, tetramer of two alpha and two beta subunits. Mg(2+) is required as a cofactor.

The protein localises to the cytoplasm. The enzyme catalyses tRNA(Phe) + L-phenylalanine + ATP = L-phenylalanyl-tRNA(Phe) + AMP + diphosphate + H(+). This chain is Phenylalanine--tRNA ligase beta subunit, found in Zymomonas mobilis subsp. mobilis (strain ATCC 31821 / ZM4 / CP4).